A 67-amino-acid polypeptide reads, in one-letter code: Probable Sec-independent protein translocase protein TatE (67 aa).

Residues 1-21 (MGEISITKLLVVAALVVLLFG) form a helical membrane-spanning segment. Residues 45-67 (DEDAGAKKDANGDLPAEKLTHKE) form a disordered region.

The protein belongs to the TatA/E family. TatE subfamily.

Its subcellular location is the cell inner membrane. Part of the twin-arginine translocation (Tat) system that transports large folded proteins containing a characteristic twin-arginine motif in their signal peptide across membranes. TatE shares overlapping functions with TatA. The chain is Probable Sec-independent protein translocase protein TatE from Escherichia fergusonii (strain ATCC 35469 / DSM 13698 / CCUG 18766 / IAM 14443 / JCM 21226 / LMG 7866 / NBRC 102419 / NCTC 12128 / CDC 0568-73).